A 769-amino-acid polypeptide reads, in one-letter code: MAEITSLFNNSSGSEEKRIASSVSIDQGLNGSNPNDQYKNMFDIYWNEYAPDIGFCTFPEEDGWMLIHPTTQSMLFRKILAGDFGYTDGQGIYSAVRSTETVIRQVQATVLMNALDATRYEDLAADWEHHIQQCNLHAGALAERYGLCGESEAVRLAHQVFETWRQTLQSSLLEFLRGITGCLYTSGLNGRVGFAKYVDWIACVGIVPVVRKVRSEQNGTPAPLNTYMGQAAELSQMLKVADATLARGAAVVTSLVECMQNVAIMDYDRTRLYYNYNRRLIMAKDDVTGMKGECLVVWPPVVCGEGVVFDSPLQRLSGEVLACYALREHARVCQVLNTAPLRVLIGRRNEDDRSHSTRAVDRIMGENDTTRAGSAASRLVKLIVNLKNMRHVGDITETVRSYLEETGNHILEGSGSVDTSQPGFGKANQSFNGGAMSGTTNVQSAFKTSVVNSINGMLEGYVNNLFKTIEGLKDVNSDLTERLQFKEGELKRLREERVKIKPSKGSHITMAEETRIADLNHEVIDLTGIIGDDAYIANSFQSRYIPPYGDDIKRLSELWKQELVRCFKLHRVNNNQGQEISVSYSNASISLLVAPYFSFILRATRLGFLVTQSEVHRSEEELCQAIFKKARTESYLSQIRILYEMQVRAEVIKRGPRRTPSPSWGLPDPTEDDERIPEPNKINNQYMHVGYKNLSHFMKGHPPERLRVHKVNAADSTLLDKIRANRRRGDGRWDVRNKYTQHFRLQRNDRQLTNTSRRGVGCERRDRRS.

The putative leucine zipper motif stretch occupies residues 458-479 (LEGYVNNLFKTIEGLKDVNSDL). Disordered regions lie at residues 654-675 (RGPR…DDER) and 750-769 (RQLT…DRRS). Residues 760 to 769 (VGCERRDRRS) show a composition bias toward basic and acidic residues.

It belongs to the herpesviridae portal protein family. In terms of assembly, homododecamerizes. Interacts with terminase subunits TRM1 and TRM3.

It localises to the virion. Its subcellular location is the host nucleus. Its function is as follows. Forms a portal in the viral capsid through which viral DNA is translocated during DNA packaging. Assembles as a dodecamer at a single fivefold axe of the T=16 icosahedric capsid. Binds to the molecular motor that translocates the viral DNA, termed terminase. This Homo sapiens (Human) protein is Portal protein (54).